The primary structure comprises 438 residues: Serine hydroxymethyltransferase (438 aa).

(6S)-5,6,7,8-tetrahydrofolate contacts are provided by residues L119 and 123-125; that span reads GHL. N6-(pyridoxal phosphate)lysine is present on K228. 370 to 372 contributes to the (6S)-5,6,7,8-tetrahydrofolate binding site; the sequence is SPF.

Belongs to the SHMT family. Homodimer. Pyridoxal 5'-phosphate is required as a cofactor.

It is found in the cytoplasm. The enzyme catalyses (6R)-5,10-methylene-5,6,7,8-tetrahydrofolate + glycine + H2O = (6S)-5,6,7,8-tetrahydrofolate + L-serine. It participates in one-carbon metabolism; tetrahydrofolate interconversion. Its pathway is amino-acid biosynthesis; glycine biosynthesis; glycine from L-serine: step 1/1. In terms of biological role, catalyzes the reversible interconversion of serine and glycine with tetrahydrofolate (THF) serving as the one-carbon carrier. This reaction serves as the major source of one-carbon groups required for the biosynthesis of purines, thymidylate, methionine, and other important biomolecules. Also exhibits THF-independent aldolase activity toward beta-hydroxyamino acids, producing glycine and aldehydes, via a retro-aldol mechanism. The chain is Serine hydroxymethyltransferase from Pelodictyon phaeoclathratiforme (strain DSM 5477 / BU-1).